A 967-amino-acid polypeptide reads, in one-letter code: Mediator of RNA polymerase II transcription subunit 14 (967 aa).

The protein belongs to the Mediator complex subunit 14 family. In terms of assembly, component of the Mediator complex.

Its subcellular location is the nucleus. In terms of biological role, component of the Mediator complex, a coactivator involved in the regulated transcription of nearly all RNA polymerase II-dependent genes. Mediator functions as a bridge to convey information from gene-specific regulatory proteins to the basal RNA polymerase II transcription machinery. Mediator is recruited to promoters by direct interactions with regulatory proteins and serves as a scaffold for the assembly of a functional preinitiation complex with RNA polymerase II and the general transcription factors. This chain is Mediator of RNA polymerase II transcription subunit 14 (RGR1), found in Eremothecium gossypii (strain ATCC 10895 / CBS 109.51 / FGSC 9923 / NRRL Y-1056) (Yeast).